A 294-amino-acid chain; its full sequence is Bifunctional protein FolD (294 aa).

Residues 166-168 (GRS), serine 191, and isoleucine 232 each bind NADP(+).

Belongs to the tetrahydrofolate dehydrogenase/cyclohydrolase family. Homodimer.

It carries out the reaction (6R)-5,10-methylene-5,6,7,8-tetrahydrofolate + NADP(+) = (6R)-5,10-methenyltetrahydrofolate + NADPH. The catalysed reaction is (6R)-5,10-methenyltetrahydrofolate + H2O = (6R)-10-formyltetrahydrofolate + H(+). It functions in the pathway one-carbon metabolism; tetrahydrofolate interconversion. In terms of biological role, catalyzes the oxidation of 5,10-methylenetetrahydrofolate to 5,10-methenyltetrahydrofolate and then the hydrolysis of 5,10-methenyltetrahydrofolate to 10-formyltetrahydrofolate. The sequence is that of Bifunctional protein FolD from Bradyrhizobium diazoefficiens (strain JCM 10833 / BCRC 13528 / IAM 13628 / NBRC 14792 / USDA 110).